A 307-amino-acid polypeptide reads, in one-letter code: Ornithine carbamoyltransferase (307 aa).

Residues 50 to 53, Q77, R101, and 128 to 131 each bind carbamoyl phosphate; these read STRT and HPCQ. L-ornithine-binding positions include N160, D224, and 228–229; that span reads SM. Carbamoyl phosphate-binding positions include 264–265 and R292; that span reads CL.

The protein belongs to the aspartate/ornithine carbamoyltransferase superfamily. OTCase family.

It is found in the cytoplasm. It carries out the reaction carbamoyl phosphate + L-ornithine = L-citrulline + phosphate + H(+). It functions in the pathway amino-acid biosynthesis; L-arginine biosynthesis; L-arginine from L-ornithine and carbamoyl phosphate: step 1/3. In terms of biological role, reversibly catalyzes the transfer of the carbamoyl group from carbamoyl phosphate (CP) to the N(epsilon) atom of ornithine (ORN) to produce L-citrulline. This Mycolicibacterium gilvum (strain PYR-GCK) (Mycobacterium gilvum (strain PYR-GCK)) protein is Ornithine carbamoyltransferase.